Consider the following 391-residue polypeptide: Phosphoprotein (391 aa).

The N-terminus domain stretch occupies residues 1–194 (MDQFIKQDET…GSLSGATLYA (194 aa)). A phosphothreonine mark is found at Thr-10, Thr-16, Thr-91, Thr-150, and Thr-165. Ser-188 is modified (phosphoserine). Positions 216 to 279 (ISANEIMDLL…MATVKIMDPG (64 aa)) are multimerization. Residues 218 to 245 (ANEIMDLLRGMDARLQHLEQKVDKVLAQ) adopt a coiled-coil conformation. Thr-250 carries the phosphothreonine modification. Residue Ser-257 is modified to Phosphoserine. A phosphothreonine mark is found at Thr-258 and Thr-282. Phosphoserine is present on residues Ser-292 and Ser-294. Phosphothreonine is present on Thr-298. Residues Ser-301 and Ser-374 each carry the phosphoserine modification. Residues 343–391 (AGQKVMITKMITDCVANPQMKQAFEQRLAKASTEDALNDIKRDIIRSAI) are interaction with the nucleoprotein. Thr-375 carries the post-translational modification Phosphothreonine.

Belongs to the rubulavirus/avulavirus P protein family. As to quaternary structure, homotetramer. Interacts (via multimerization domain) with polymerase L; this interaction forms the polymerase L-P complex. Interacts (via N-terminus) with N0 (via Ncore); this interaction allows P to chaperon N0 to avoid N polymerization before encapsidation. Interacts (via C-terminus) with N-RNA template; this interaction positions the polymerase on the template for both transcription and replication. Interacts with host RPS6KB1 kinase; this interaction may play a role in the viral replication and transcription.

Its subcellular location is the virion. Its function is as follows. Essential cofactor of the RNA polymerase L that plays a central role in the transcription and replication by forming the polymerase complex with RNA polymerase L and recruiting L to the genomic N-RNA template for RNA synthesis. Also plays a central role in the encapsidation of nascent RNA chains by forming the encapsidation complex with the nucleocapsid protein N (N-P complex). Acts as a chaperone for newly synthesized free N protein, so-called N0, allowing encapsidation of nascent RNA chains during replication. The nucleoprotein protein N prevents excessive phosphorylation of P, which leads to down-regulation of viral transcription/ replication. Participates, together with N, in the formation of viral factories (viroplasms), which are large inclusions in the host cytoplasm where replication takes place. The polypeptide is Phosphoprotein (Homo sapiens (Human)).